We begin with the raw amino-acid sequence, 951 residues long: Valine--tRNA ligase (951 aa).

The 'HIGH' region signature appears at 42 to 52 (PNVTGSLHMGH). The short motif at 554 to 558 (KMSKS) is the 'KMSKS' region element. K557 lines the ATP pocket. Residues 880 to 944 (AGLINKEDEL…AEAKAKLIEQ (65 aa)) adopt a coiled-coil conformation.

It belongs to the class-I aminoacyl-tRNA synthetase family. ValS type 1 subfamily. As to quaternary structure, monomer.

It is found in the cytoplasm. The enzyme catalyses tRNA(Val) + L-valine + ATP = L-valyl-tRNA(Val) + AMP + diphosphate. Its function is as follows. Catalyzes the attachment of valine to tRNA(Val). As ValRS can inadvertently accommodate and process structurally similar amino acids such as threonine, to avoid such errors, it has a 'posttransfer' editing activity that hydrolyzes mischarged Thr-tRNA(Val) in a tRNA-dependent manner. The chain is Valine--tRNA ligase from Shigella boydii serotype 4 (strain Sb227).